A 223-amino-acid chain; its full sequence is Type 3 secretion system stator protein (223 aa).

The protein belongs to the SctL stator family. In terms of assembly, the core secretion machinery of the T3SS is composed of approximately 20 different proteins, including cytoplasmic components, a base, an export apparatus and a needle. This subunit is part of the cytosolic complex. Interacts directly with YscN/SctN (T3SS ATPase) and YscQ/SctQ (the major sorting platform component). Forms homodimers.

It is found in the cytoplasm. Functionally, component of the type III secretion system (T3SS), also called injectisome, which is used to inject bacterial effector proteins into eukaryotic host cells. Acts as a regulator of the YscN/SctN ATPase activity. Overexpression of YscL/SctL abolishes type III secretion and down-regulates the expression of secretion apparatus components. This is Type 3 secretion system stator protein from Yersinia enterocolitica.